Here is a 253-residue protein sequence, read N- to C-terminus: Giant extracellular hemoglobin linker 1 chain (253 aa).

In terms of domain architecture, LDL-receptor class A spans 89 to 131 (HHCDDDHLSCKDVAFTCIGHNLVCDGHKDCLNGHDEDEETCSI). 3 cysteine pairs are disulfide-bonded: C91-C105, C98-C118, and C112-C129.

Disulfide-linked dimer of identical chains. A model is proposed for the subunit structure of the Tylorrhynchus hemoglobin, consisting of 216 polypeptide chains, 192 heme-containing chains, and 24 linker chains.

In terms of biological role, acts as a linker for the assembly of heme-containing chains in the construction of giant hemoglobin. In Tylorrhynchus heterochetus (Japanese palolo worm), this protein is Giant extracellular hemoglobin linker 1 chain.